The primary structure comprises 863 residues: Neuroligin-1 (863 aa).

The signal sequence occupies residues 1-45 (MALPRCTWPNYVWRAVMACLVHRGLGAPLTLCMLGCLLQAGHVLS). The Extracellular portion of the chain corresponds to 46–717 (QKLDDVDPLV…DQRDYSTELS (672 aa)). Asn-109 carries N-linked (GlcNAc...) (complex) asparagine glycosylation. Residues Cys-117 and Cys-153 are joined by a disulfide bond. Residues 183–212 (KGGPLTKKQTDDLGDNDGAEDEDIRDSGGP) form a disordered region. Residues 194–206 (DLGDNDGAEDEDI) are compositionally biased toward acidic residues. Residues Asn-323 and Asn-363 are each glycosylated (N-linked (GlcNAc...) (complex) asparagine). 2 cysteine pairs are disulfide-bonded: Cys-362/Cys-373 and Cys-532/Cys-566. The N-linked (GlcNAc...) asparagine glycan is linked to Asn-567. Residues 670-708 (PSTDITFRPTRKNSVPVTSAFPTAKQDDPKQQPSPFSVD) form a disordered region. The span at 681-690 (KNSVPVTSAF) shows a compositional bias: polar residues. O-linked (GalNAc...) serine glycosylation is found at Ser-703 and Ser-706. The chain crosses the membrane as a helical span at residues 718–738 (VTIAVGASLLFLNILAFAALY). The Cytoplasmic segment spans residues 739-863 (YKKDKRRHDV…HPHSHSTTRV (125 aa)). Residues 842 to 863 (GGQNNTLPHPHPHPHSHSTTRV) form a disordered region. Basic residues predominate over residues 851 to 863 (PHPHPHSHSTTRV).

The protein belongs to the type-B carboxylesterase/lipase family. Interacts with neurexins NRXN1, NRXN2 and NRXN3. Interaction with neurexins is mediated by heparan sulfate glycan modification on neurexin. Interacts with NLGN3. Interacts with AIP1 and PDZRN3. Interacts (via its C-terminus) with DLG4/PSD-95 (via PDZ domain 3). Interacts with GOPC. Expressed in the blood vessel walls (at protein level). Highly expressed in brain through prenatal stages, and at lower levels in pancreas islet beta cells.

The protein localises to the cell membrane. It localises to the postsynaptic density. Its subcellular location is the synaptic cleft. The protein resides in the synaptic cell membrane. Cell surface protein involved in cell-cell-interactions via its interactions with neurexin family members. Plays a role in synapse function and synaptic signal transmission, and probably mediates its effects by recruiting and clustering other synaptic proteins. May promote the initial formation of synapses, but is not essential for this. In vitro, triggers the de novo formation of presynaptic structures. May be involved in specification of excitatory synapses. Required to maintain wakefulness quality and normal synchrony of cerebral cortex activity during wakefulness and sleep. The protein is involved in nervous system development. This Homo sapiens (Human) protein is Neuroligin-1 (NLGN1).